The chain runs to 194 residues: Inosine triphosphate pyrophosphatase (194 aa).

11 to 16 lines the ITP pocket; sequence TGNAKK. Position 39 (Glu39) interacts with Mg(2+). Residues Lys51, 67-68, Lys84, 143-146, Lys166, and 171-172 contribute to the ITP site; these read DT, FGWD, and HR.

It belongs to the HAM1 NTPase family. As to quaternary structure, homodimer. Mg(2+) is required as a cofactor. It depends on Mn(2+) as a cofactor.

It is found in the cytoplasm. The catalysed reaction is ITP + H2O = IMP + diphosphate + H(+). It catalyses the reaction dITP + H2O = dIMP + diphosphate + H(+). The enzyme catalyses XTP + H2O = XMP + diphosphate + H(+). Functionally, pyrophosphatase that hydrolyzes non-canonical purine nucleotides such as inosine triphosphate (ITP), deoxyinosine triphosphate (dITP) or xanthosine 5'-triphosphate (XTP) to their respective monophosphate derivatives. The enzyme does not distinguish between the deoxy- and ribose forms. Probably excludes non-canonical purines from RNA and DNA precursor pools, thus preventing their incorporation into RNA and DNA and avoiding chromosomal lesions. The chain is Inosine triphosphate pyrophosphatase (itpa) from Dictyostelium discoideum (Social amoeba).